The following is a 120-amino-acid chain: MITKVDRNAVRKKRHARIRKKIFGTAERPRLSVFRSNKHIYAQIIDDTKSSTIVSASTLDKEFGLDSTNNIEAAKKVGELVAKRALEKGIKKVVFDRGGYLYHGRVKALADAAREAGLEF.

This sequence belongs to the universal ribosomal protein uL18 family. In terms of assembly, part of the 50S ribosomal subunit; part of the 5S rRNA/L5/L18/L25 subcomplex. Contacts the 5S and 23S rRNAs.

Functionally, this is one of the proteins that bind and probably mediate the attachment of the 5S RNA into the large ribosomal subunit, where it forms part of the central protuberance. This is Large ribosomal subunit protein uL18 from Geobacillus kaustophilus (strain HTA426).